The sequence spans 338 residues: MSRFASLAAFEAALERLPVADADAITAARARQASLTKPAGSLGRLEDIAVFMAGWQGTAQPVIEQGRAAIFAGNHGFVVHGVSAFPASVTAAMVGNFAAGGAAINALAGAAGLDLRVIALDLDRPTADFTIAAAMDETECLAALAAGAAVVEPGLHLLVVGEMGIGNSTAAAALCARSYGGSPAQWAGPGTGVDAGGIARKVAVVERALAFHADAPDTPFEILRRLGGREIAGVAGAVLEARRLRIPVVLDGFISCAALAPLAAAVPAITDHCLAGHCSAEPGHIRLLEHLGLDPLLSLGMRLGEGSGAALAVSVIRAALATHNGMATFAQAGVADGL.

The Proton acceptor role is filled by Glu-305.

It belongs to the CobT family.

It catalyses the reaction 5,6-dimethylbenzimidazole + nicotinate beta-D-ribonucleotide = alpha-ribazole 5'-phosphate + nicotinate + H(+). Its pathway is nucleoside biosynthesis; alpha-ribazole biosynthesis; alpha-ribazole from 5,6-dimethylbenzimidazole: step 1/2. Catalyzes the synthesis of alpha-ribazole-5'-phosphate from nicotinate mononucleotide (NAMN) and 5,6-dimethylbenzimidazole (DMB). This is Nicotinate-nucleotide--dimethylbenzimidazole phosphoribosyltransferase from Novosphingobium aromaticivorans (strain ATCC 700278 / DSM 12444 / CCUG 56034 / CIP 105152 / NBRC 16084 / F199).